Reading from the N-terminus, the 743-residue chain is Catalase-peroxidase (743 aa).

A compositionally biased stretch (polar residues) spans 1-15 (MSSDSRPPQPDTSTQ). A disordered region spans residues 1–40 (MSSDSRPPQPDTSTQSNSESESPAISSPTPQDHAPMTNRD). Residues 16–28 (SNSESESPAISSP) are compositionally biased toward low complexity. Positions 110 to 233 (WHAAGTYRIQ…YGATTMGLIY (124 aa)) form a cross-link, tryptophyl-tyrosyl-methioninium (Trp-Tyr) (with M-259). His111 serves as the catalytic Proton acceptor. Residues 233–259 (YVNPEGPEGKPDPVAAAHDIRETFARM) constitute a cross-link (tryptophyl-tyrosyl-methioninium (Tyr-Met) (with W-110)). Position 274 (His274) interacts with heme b. Positions 490 to 511 (DKRGGANGGRLRLEPQKSWESN) are disordered.

It belongs to the peroxidase family. Peroxidase/catalase subfamily. Homodimer or homotetramer. Heme b is required as a cofactor. Formation of the three residue Trp-Tyr-Met cross-link is important for the catalase, but not the peroxidase activity of the enzyme.

It catalyses the reaction H2O2 + AH2 = A + 2 H2O. The catalysed reaction is 2 H2O2 = O2 + 2 H2O. Its function is as follows. Bifunctional enzyme with both catalase and broad-spectrum peroxidase activity. The chain is Catalase-peroxidase from Mycobacterium ulcerans (strain Agy99).